The following is a 183-amino-acid chain: Shikimate kinase (183 aa).

Residue 25-30 (GAGKTT) participates in ATP binding. Position 29 (Thr29) interacts with Mg(2+). Substrate contacts are provided by Asp47, Arg71, and Gly93. Arg131 provides a ligand contact to ATP. Substrate is bound at residue Arg150.

The protein belongs to the shikimate kinase family. In terms of assembly, monomer. The cofactor is Mg(2+).

It is found in the cytoplasm. It catalyses the reaction shikimate + ATP = 3-phosphoshikimate + ADP + H(+). It functions in the pathway metabolic intermediate biosynthesis; chorismate biosynthesis; chorismate from D-erythrose 4-phosphate and phosphoenolpyruvate: step 5/7. Its function is as follows. Catalyzes the specific phosphorylation of the 3-hydroxyl group of shikimic acid using ATP as a cosubstrate. The chain is Shikimate kinase from Dechloromonas aromatica (strain RCB).